The following is a 138-amino-acid chain: Transcription antitermination protein NusB (138 aa).

The protein belongs to the NusB family.

Its function is as follows. Involved in transcription antitermination. Required for transcription of ribosomal RNA (rRNA) genes. Binds specifically to the boxA antiterminator sequence of the ribosomal RNA (rrn) operons. This chain is Transcription antitermination protein NusB, found in Blochmanniella floridana.